We begin with the raw amino-acid sequence, 169 residues long: uncharacterized protein (169 aa).

Residues 1 to 91 (MFSSTFRRLA…NKEQYTVRCL (91 aa)) constitute a mitochondrion transit peptide. The segment at 54–76 (PQPKSPGSLPSSTRTAPNPNGEE) is disordered. A compositionally biased stretch (polar residues) spans 61-71 (SLPSSTRTAPN).

It is found in the mitochondrion. This is an uncharacterized protein from Trypanosoma brucei brucei (strain 927/4 GUTat10.1).